The sequence spans 579 residues: Cyclin-T1-5 (579 aa).

Disordered regions lie at residues 1–27 and 271–419; these read MAGV…HEKQ and RVPA…GDAL. The segment covering 11-20 has biased composition (polar residues); it reads YSESGVSSHS. Positions 274–283 are enriched in low complexity; that stretch reads ASQGSEVESS. Positions 306-334 are enriched in polar residues; it reads SRQTSSVRSTHEQSNSDNHGGSSKGVLNQ. Composition is skewed to basic and acidic residues over residues 349–380 and 389–414; these read DNKE…EAPH and PGKD…RNVD. Phosphoserine is present on Ser423. Basic and acidic residues-rich tracts occupy residues 474 to 512, 538 to 556, and 563 to 579; these read DEKT…KNTE, KQSE…ESHK, and HHGD…NNHS. Residues 474-579 are disordered; it reads DEKTKERKVQ…RRHSQENNHS (106 aa).

Belongs to the cyclin family. Cyclin T subfamily.

The polypeptide is Cyclin-T1-5 (CYCT1-5) (Arabidopsis thaliana (Mouse-ear cress)).